Here is a 228-residue protein sequence, read N- to C-terminus: L-ribulose-5-phosphate 4-epimerase UlaF (228 aa).

Substrate is bound by residues 26–27 (GN), 43–44 (SG), and 72–73 (SS). Residues aspartate 74, histidine 93, and histidine 95 each contribute to the Zn(2+) site. Aspartate 118 acts as the Proton donor/acceptor in catalysis. Zn(2+) is bound at residue histidine 167. The active-site Proton donor/acceptor is tyrosine 225.

The protein belongs to the aldolase class II family. AraD/FucA subfamily. It depends on Zn(2+) as a cofactor.

It catalyses the reaction L-ribulose 5-phosphate = D-xylulose 5-phosphate. It participates in cofactor degradation; L-ascorbate degradation; D-xylulose 5-phosphate from L-ascorbate: step 4/4. Functionally, catalyzes the isomerization of L-ribulose 5-phosphate to D-xylulose 5-phosphate. Is involved in the anaerobic L-ascorbate utilization. This Escherichia coli (strain SE11) protein is L-ribulose-5-phosphate 4-epimerase UlaF.